The chain runs to 631 residues: 1-deoxy-D-xylulose-5-phosphate synthase (631 aa).

Thiamine diphosphate is bound by residues H87 and 128–130 (GHS). Residue D159 participates in Mg(2+) binding. Residues 160 to 161 (GA), N188, F295, and E377 contribute to the thiamine diphosphate site. N188 contributes to the Mg(2+) binding site.

The protein belongs to the transketolase family. DXPS subfamily. In terms of assembly, homodimer. Requires Mg(2+) as cofactor. Thiamine diphosphate is required as a cofactor.

It carries out the reaction D-glyceraldehyde 3-phosphate + pyruvate + H(+) = 1-deoxy-D-xylulose 5-phosphate + CO2. It participates in metabolic intermediate biosynthesis; 1-deoxy-D-xylulose 5-phosphate biosynthesis; 1-deoxy-D-xylulose 5-phosphate from D-glyceraldehyde 3-phosphate and pyruvate: step 1/1. Functionally, catalyzes the acyloin condensation reaction between C atoms 2 and 3 of pyruvate and glyceraldehyde 3-phosphate to yield 1-deoxy-D-xylulose-5-phosphate (DXP). The protein is 1-deoxy-D-xylulose-5-phosphate synthase of Pseudomonas entomophila (strain L48).